Consider the following 141-residue polypeptide: Putative nickel-responsive regulator (141 aa).

Ni(2+)-binding residues include His-80, His-91, His-93, and Cys-99.

The protein belongs to the transcriptional regulatory CopG/NikR family. Requires Ni(2+) as cofactor.

Functionally, transcriptional regulator. The chain is Putative nickel-responsive regulator from Methanococcus maripaludis (strain C7 / ATCC BAA-1331).